The following is a 249-amino-acid chain: 1-(5-phosphoribosyl)-5-[(5-phosphoribosylamino)methylideneamino] imidazole-4-carboxamide isomerase (249 aa).

The Proton acceptor role is filled by aspartate 11. The Proton donor role is filled by aspartate 133.

It belongs to the HisA/HisF family.

Its subcellular location is the cytoplasm. It carries out the reaction 1-(5-phospho-beta-D-ribosyl)-5-[(5-phospho-beta-D-ribosylamino)methylideneamino]imidazole-4-carboxamide = 5-[(5-phospho-1-deoxy-D-ribulos-1-ylimino)methylamino]-1-(5-phospho-beta-D-ribosyl)imidazole-4-carboxamide. The protein operates within amino-acid biosynthesis; L-histidine biosynthesis; L-histidine from 5-phospho-alpha-D-ribose 1-diphosphate: step 4/9. The sequence is that of 1-(5-phosphoribosyl)-5-[(5-phosphoribosylamino)methylideneamino] imidazole-4-carboxamide isomerase from Mannheimia succiniciproducens (strain KCTC 0769BP / MBEL55E).